Here is a 43-residue protein sequence, read N- to C-terminus: Large ribosomal subunit protein uL5 (43 aa).

The protein belongs to the universal ribosomal protein uL5 family. In terms of assembly, part of the 50S ribosomal subunit; part of the 5S rRNA/L5/L18/L25 subcomplex. Contacts the 5S rRNA and the P site tRNA. Forms a bridge to the 30S subunit in the 70S ribosome.

Its function is as follows. This is one of the proteins that bind and probably mediate the attachment of the 5S RNA into the large ribosomal subunit, where it forms part of the central protuberance. In the 70S ribosome it contacts protein S13 of the 30S subunit (bridge B1b), connecting the 2 subunits; this bridge is implicated in subunit movement. Contacts the P site tRNA; the 5S rRNA and some of its associated proteins might help stabilize positioning of ribosome-bound tRNAs. The sequence is that of Large ribosomal subunit protein uL5 (rplE) from Serratia marcescens.